Here is a 307-residue protein sequence, read N- to C-terminus: HTH-type transcriptional regulator DmlR (307 aa).

Residues 5-62 enclose the HTH lysR-type domain; sequence PLLNDLRVFMLVARRAGFAAVAEELGVSPAFVSKRIALLEQTLNVVLLHRTTRRVTIT. Positions 22–41 form a DNA-binding region, H-T-H motif; it reads FAAVAEELGVSPAFVSKRIA.

It belongs to the LysR transcriptional regulatory family.

Functionally, transcriptional regulator required for the aerobic growth on D-malate as the sole carbon source. Induces the expression of dmlA in response to D-malate or L- or meso-tartrate. Negatively regulates its own expression. The sequence is that of HTH-type transcriptional regulator DmlR (dmlR) from Escherichia coli (strain K12).